Reading from the N-terminus, the 606-residue chain is Serine/threonine-protein kinase A-Raf (606 aa).

Residues G19–L91 enclose the RBD domain. The segment at M98–C144 adopts a Phorbol-ester/DAG-type zinc-finger fold. Positions 99, 112, 115, 125, 128, 133, 136, and 144 each coordinate Zn(2+). S157 and S162 each carry phosphoserine. The interval D160 to L207 is disordered. T181 bears the Phosphothreonine mark. Phosphoserine is present on residues S186 and S214. The segment at S240–K290 is disordered. T253 is modified (phosphothreonine). Phosphoserine occurs at positions 257 and 269. Residues S274–K289 are compositionally biased toward basic and acidic residues. Residues V310–L570 enclose the Protein kinase domain. Residues I316 to V324 and K336 each bind ATP. Phosphothreonine is present on T318. Catalysis depends on D429, which acts as the Proton acceptor.

It belongs to the protein kinase superfamily. TKL Ser/Thr protein kinase family. RAF subfamily. In terms of assembly, interacts with TH1L/NELFD. Zn(2+) is required as a cofactor. Post-translationally, dephosphorylation of Ser-214 by the SHOC2-MRAS-PP1c (SMP) complex consisting of SHOC2, GTP-bound M-Ras/MRAS and the catalytic subunit of protein phosphatase 1 (PPP1CA, PPP1CB or PPP1CC); this relieves inactivation and stimulates kinase activity. In terms of tissue distribution, predominantly in urogenital tissues.

It carries out the reaction L-seryl-[protein] + ATP = O-phospho-L-seryl-[protein] + ADP + H(+). It catalyses the reaction L-threonyl-[protein] + ATP = O-phospho-L-threonyl-[protein] + ADP + H(+). Its function is as follows. Involved in the transduction of mitogenic signals from the cell membrane to the nucleus. May also regulate the TOR signaling cascade. Phosphorylates PFKFB2. In terms of biological role, serves as a positive regulator of myogenic differentiation by inducing cell cycle arrest, the expression of myogenin and other muscle-specific proteins, and myotube formation. This Homo sapiens (Human) protein is Serine/threonine-protein kinase A-Raf (ARAF).